Reading from the N-terminus, the 295-residue chain is Sulfotransferase 1 family member D1 (295 aa).

Residue 48 to 53 (KSGTTW) coordinates 3'-phosphoadenylyl sulfate. Residues Phe81 and 106 to 108 (KTH) contribute to the substrate site. Residue His108 is the Proton acceptor of the active site. The 3'-phosphoadenylyl sulfate site is built by Arg130 and Ser138. Phe142 is a binding site for substrate. Residues Tyr193, Ser227, and 257–259 (RKG) each bind 3'-phosphoadenylyl sulfate.

It belongs to the sulfotransferase 1 family.

The protein resides in the cytoplasm. Functionally, sulfotransferase with broad substrate specificity that utilizes 3'-phospho-5'-adenylyl sulfate (PAPS) as sulfonate donor to catalyze the sulfate conjugation of catecholamines, such as dopamine, prostaglandins, leukotriene E4, drugs and xenobiotic compounds. Has sulfotransferase activity towards p-nitrophenol, 2-naphthylamine and minoxidil (in vitro). Sulfonation increases the water solubility of most compounds, and therefore their renal excretion, but it can also result in bioactivation to form active metabolites. The protein is Sulfotransferase 1 family member D1 (Sult1d1) of Rattus norvegicus (Rat).